The primary structure comprises 662 residues: MVSQSTVRQDSPVEPWEGISDHSGIIDGSPRLLNTDHPPCQLDIRLMRHKAVWINPQDVQQQPQDLQSQVPAAGNSGTHFVTDAASPSGPSPSCLGDSLAETTLSEDTTDSVGSASPHGSSEKSSSFSLSSTEVHMVRPGYSHRVSLPTSPGILATSPYPETDSAFFEPSHLTSAADEGAVQVSRRTISSNSFSPEVFVLPVDVEKENAHFYVADMIISAMEKMKCNILSQQQTESWSKEVSGLLGSDQPDSEMTFDTNIKQESGSSTSSYSGYEGCAVLQVSPVTETRTYHDVKEICKCDVDEFVILELGDFNDITETCSCSCSSSKSVTYEPDFNSAELLAKELYRVFQKCWILSVVNSQLAGSLSAAGSIVVNEECVRKDFESSMNVVQEIKFKSRIRGTEDWAPPRFQIIFNIHPPLKRDLVVAAQNFFCAGCGTPVEPKFVKRLRYCEYLGKYFCDCCHSYAESCIPARILMMWDFKKYYVSNFSKQLLDSIWHQPIFNLLSIGQSLYAKAKELDRVKEIQEQLFHIKKLLKTCRFANSALKEFEQVPGHLTDELHLFSLEDLVRIKKGLLAPLLKDILKASLAHVAGCELCQGKGFICEFCQNTTVIFPFQTATCRRCSACRACFHKQCFQSSECPRCARITARRKLLESVASAAT.

Disordered regions lie at residues 1–34 (MVSQ…RLLN) and 58–131 (DVQQ…SLSS). The segment covering 58-71 (DVQQQPQDLQSQVP) has biased composition (low complexity). Positions 100 to 113 (AETTLSEDTTDSVG) are enriched in polar residues. Residues 114–131 (SASPHGSSEKSSSFSLSS) are compositionally biased toward low complexity. A Phosphoserine; by MTOR modification is found at Ser157. The tract at residues 196 to 235 (EVFVLPVDVEKENAHFYVADMIISAMEKMKCNILSQQQTE) is interaction with UVRAG. N6-acetyllysine occurs at positions 483, 523, 533, 573, and 633.

In terms of assembly, interacts with UVRAG; the interaction is direct and promotes association with the PI3K/PI3KC3 and HOPS complexes. Interacts with STX17. Post-translationally, phosphorylated by MTOR at Ser-157 under nutrient-rich conditions. Phosphorylation prevents acetylation by KAT5/TIP60 and impairs RUBCNL/PACER function and autophagosome maturation. Under autophagy induction, Phosphorylation by MTOR is repressed, enabling acetylation by KAT5/TIP60. In terms of processing, acetylated by KAT5/TIP60 under autophagy induction, promoting autophagosome maturation and lipid metabolism. Acetylation is prevented by phosphorylation by MTOR. Lys-483 and Lys-573 constitute the key sites for tuning function in autophagy. Expressed weakly in cervical carcinoma cell lines.

The protein resides in the cytoplasmic vesicle. The protein localises to the autophagosome membrane. Functionally, regulator of autophagy that promotes autophagosome maturation by facilitating the biogenesis of phosphatidylinositol 3-phosphate (PtdIns(3)P) in late steps of autophagy. Acts by antagonizing RUBCN, thereby stimulating phosphatidylinositol 3-kinase activity of the PI3K/PI3KC3 complex. Following anchorage to the autophagosomal SNARE STX17, promotes the recruitment of PI3K/PI3KC3 and HOPS complexes to the autophagosome to regulate the fusion specificity of autophagosomes with late endosomes/lysosomes. Binds phosphoinositides phosphatidylinositol 3-phosphate (PtdIns(3)P), 4-phosphate (PtdIns(4)P) and 5-phosphate (PtdIns(5)P). In addition to its role in autophagy, acts as a regulator of lipid and glycogen homeostasis. May act as a tumor suppressor. The polypeptide is Protein associated with UVRAG as autophagy enhancer (Homo sapiens (Human)).